Consider the following 236-residue polypeptide: Ubiquinone biosynthesis O-methyltransferase (236 aa).

Arg-39, Gly-59, Asp-80, and Met-124 together coordinate S-adenosyl-L-methionine.

Belongs to the methyltransferase superfamily. UbiG/COQ3 family.

It carries out the reaction a 3-demethylubiquinol + S-adenosyl-L-methionine = a ubiquinol + S-adenosyl-L-homocysteine + H(+). The enzyme catalyses a 3-(all-trans-polyprenyl)benzene-1,2-diol + S-adenosyl-L-methionine = a 2-methoxy-6-(all-trans-polyprenyl)phenol + S-adenosyl-L-homocysteine + H(+). Its pathway is cofactor biosynthesis; ubiquinone biosynthesis. O-methyltransferase that catalyzes the 2 O-methylation steps in the ubiquinone biosynthetic pathway. In Shewanella sp. (strain MR-4), this protein is Ubiquinone biosynthesis O-methyltransferase.